The chain runs to 311 residues: MALPILLDCDPGHDDAIAIVLALASPELDVKAITSSAGNQTPEKTLRNVLRMLTLLNRTDIPVASGAVKPLMRNLIIADNVHGESGLDGPALPEPAFAPQNCTAVELMAKTLRESEEPVTIVSTGPQTNVALLLNSHPELHSKIARIVIMGGAMGLGNWTPAAEFNIYVDPEAAEIVFQSGIPVVMAGLDVTHKAQIHVEDTERFRAIGNPVSTIVAELLDFFLEYHKDEKWGFVGAPLHDPCTIAWLLKPELFTTVERWVGVETQGKYTQGMTVVDYYYLTGNKPNATVMVDVDRQGFVDLLADRLKFYA.

His240 is an active-site residue.

This sequence belongs to the IUNH family. RihA subfamily.

Hydrolyzes with equal efficiency cytidine or uridine to ribose and cytosine or uracil, respectively. The chain is Pyrimidine-specific ribonucleoside hydrolase RihA from Escherichia coli O127:H6 (strain E2348/69 / EPEC).